We begin with the raw amino-acid sequence, 459 residues long: UDP-N-acetylmuramoylalanine--D-glutamate ligase (459 aa).

Residue 118-124 (GTNGKTT) coordinates ATP.

The protein belongs to the MurCDEF family.

The protein resides in the cytoplasm. It catalyses the reaction UDP-N-acetyl-alpha-D-muramoyl-L-alanine + D-glutamate + ATP = UDP-N-acetyl-alpha-D-muramoyl-L-alanyl-D-glutamate + ADP + phosphate + H(+). It participates in cell wall biogenesis; peptidoglycan biosynthesis. Its function is as follows. Cell wall formation. Catalyzes the addition of glutamate to the nucleotide precursor UDP-N-acetylmuramoyl-L-alanine (UMA). The sequence is that of UDP-N-acetylmuramoylalanine--D-glutamate ligase from Desulfosudis oleivorans (strain DSM 6200 / JCM 39069 / Hxd3) (Desulfococcus oleovorans).